The chain runs to 138 residues: Nucleoside diphosphate kinase (138 aa).

ATP-binding residues include Lys9, Phe57, Arg85, Thr91, Arg102, and Asn112. His115 functions as the Pros-phosphohistidine intermediate in the catalytic mechanism.

It belongs to the NDK family. Mg(2+) is required as a cofactor.

It is found in the cytoplasm. The catalysed reaction is a 2'-deoxyribonucleoside 5'-diphosphate + ATP = a 2'-deoxyribonucleoside 5'-triphosphate + ADP. It catalyses the reaction a ribonucleoside 5'-diphosphate + ATP = a ribonucleoside 5'-triphosphate + ADP. In terms of biological role, major role in the synthesis of nucleoside triphosphates other than ATP. The ATP gamma phosphate is transferred to the NDP beta phosphate via a ping-pong mechanism, using a phosphorylated active-site intermediate. The polypeptide is Nucleoside diphosphate kinase (Picrophilus torridus (strain ATCC 700027 / DSM 9790 / JCM 10055 / NBRC 100828 / KAW 2/3)).